The following is a 286-amino-acid chain: Small ribosomal subunit protein uS3 (286 aa).

The 69-residue stretch at V39 to R107 folds into the KH type-2 domain. The tract at residues Q213 to S286 is disordered. Basic and acidic residues predominate over residues G241–N262.

Belongs to the universal ribosomal protein uS3 family. As to quaternary structure, part of the 30S ribosomal subunit. Forms a tight complex with proteins S10 and S14.

Functionally, binds the lower part of the 30S subunit head. Binds mRNA in the 70S ribosome, positioning it for translation. The sequence is that of Small ribosomal subunit protein uS3 from Nitrosospira multiformis (strain ATCC 25196 / NCIMB 11849 / C 71).